Consider the following 132-residue polypeptide: Small ribosomal subunit protein uS9 (132 aa).

It belongs to the universal ribosomal protein uS9 family.

The sequence is that of Small ribosomal subunit protein uS9 from Baumannia cicadellinicola subsp. Homalodisca coagulata.